Reading from the N-terminus, the 1123-residue chain is uncharacterized protein (1123 aa).

Disordered stretches follow at residues 136 to 229, 262 to 471, 483 to 514, 527 to 609, 629 to 769, 782 to 812, 835 to 1005, and 1070 to 1099; these read LGES…PKLT, MLQY…LNQH, LSSI…SPNL, KKIN…QSDD, SILC…NNIS, LKPK…NSSS, ITNN…GESN, and NNNN…NNNI. Gly residues predominate over residues 166–185; the sequence is GGNGGNSGTNGDGDDGGCSL. Residues 190-199 are compositionally biased toward acidic residues; the sequence is DENDYEDGMV. The span at 211–223 shows a compositional bias: gly residues; it reads SGDGGGGGGGGGD. The span at 262–322 shows a compositional bias: low complexity; sequence MLQYQQQQQQ…TTTTHSNNSN (61 aa). A compositionally biased stretch (polar residues) spans 329–343; sequence PLNNSNSNIHFLTNQ. Low complexity-rich tracts occupy residues 344–387, 397–464, 489–499, 527–548, and 563–585; these read QNSD…SNLN, STST…SSSS, NNKENNNNNNN, KKIN…NISS, and HQQQ…QQHQ. Polar residues predominate over residues 590–604; the sequence is SKSSSELQVPSSNYH. Residues 632–646 show a composition bias toward basic and acidic residues; the sequence is CKDDSKTNTNKDKDN. Low complexity-rich tracts occupy residues 647–707 and 727–769; these read NNSN…INNN and SVSS…NNIS. Residues 790–799 show a composition bias toward polar residues; sequence SSPSIPTTSP. 2 stretches are compositionally biased toward low complexity: residues 835–984 and 1070–1098; these read ITNN…NNNI and NNNN…NNNN.

This is an uncharacterized protein from Dictyostelium discoideum (Social amoeba).